The sequence spans 264 residues: Thiazole synthase (264 aa).

The active-site Schiff-base intermediate with DXP is the lysine 106. Residues glycine 167, 193–194 (AG), and 215–216 (NS) each bind 1-deoxy-D-xylulose 5-phosphate.

This sequence belongs to the ThiG family. As to quaternary structure, homotetramer. Forms heterodimers with either ThiH or ThiS.

The protein localises to the cytoplasm. It catalyses the reaction [ThiS sulfur-carrier protein]-C-terminal-Gly-aminoethanethioate + 2-iminoacetate + 1-deoxy-D-xylulose 5-phosphate = [ThiS sulfur-carrier protein]-C-terminal Gly-Gly + 2-[(2R,5Z)-2-carboxy-4-methylthiazol-5(2H)-ylidene]ethyl phosphate + 2 H2O + H(+). Its pathway is cofactor biosynthesis; thiamine diphosphate biosynthesis. Catalyzes the rearrangement of 1-deoxy-D-xylulose 5-phosphate (DXP) to produce the thiazole phosphate moiety of thiamine. Sulfur is provided by the thiocarboxylate moiety of the carrier protein ThiS. In vitro, sulfur can be provided by H(2)S. The polypeptide is Thiazole synthase (Pseudomonas fluorescens (strain Pf0-1)).